Reading from the N-terminus, the 237-residue chain is Ribosomal RNA small subunit methyltransferase G (237 aa).

Residues glycine 78, phenylalanine 83, 129-130, and arginine 148 contribute to the S-adenosyl-L-methionine site; that span reads AE.

It belongs to the methyltransferase superfamily. RNA methyltransferase RsmG family.

It is found in the cytoplasm. Functionally, specifically methylates the N7 position of a guanine in 16S rRNA. The protein is Ribosomal RNA small subunit methyltransferase G of Streptococcus equi subsp. zooepidemicus (strain H70).